A 422-amino-acid chain; its full sequence is Proline--tRNA ligase (422 aa).

It belongs to the class-II aminoacyl-tRNA synthetase family. ProS type 2 subfamily. Homodimer.

It localises to the cytoplasm. It carries out the reaction tRNA(Pro) + L-proline + ATP = L-prolyl-tRNA(Pro) + AMP + diphosphate. Functionally, catalyzes the attachment of proline to tRNA(Pro) in a two-step reaction: proline is first activated by ATP to form Pro-AMP and then transferred to the acceptor end of tRNA(Pro). This is Proline--tRNA ligase from Wolbachia sp. subsp. Drosophila simulans (strain wRi).